A 178-amino-acid polypeptide reads, in one-letter code: Nucleoside-triphosphatase THEP1 (178 aa).

ATP contacts are provided by residues glycine 7 to threonine 14 and valine 102 to glycine 109.

It belongs to the THEP1 NTPase family. As to quaternary structure, monomer.

The enzyme catalyses a ribonucleoside 5'-triphosphate + H2O = a ribonucleoside 5'-diphosphate + phosphate + H(+). In terms of biological role, has nucleotide phosphatase activity towards ATP, GTP, CTP, TTP and UTP. May hydrolyze nucleoside diphosphates with lower efficiency. Does not have kinase activity. The sequence is that of Nucleoside-triphosphatase THEP1 from Aquifex aeolicus (strain VF5).